The sequence spans 232 residues: Ribonuclease 3 (232 aa).

The RNase III domain occupies 9-131; sequence INLLQKKLGY…IIGGIFLDSN (123 aa). Glu-44 is a Mg(2+) binding site. Residue Asp-48 is part of the active site. 2 residues coordinate Mg(2+): Asp-117 and Glu-120. Glu-120 is a catalytic residue. Residues 158–228 enclose the DRBM domain; it reads DPKTRLQEYL…AENALKFLIE (71 aa).

The protein belongs to the ribonuclease III family. Homodimer. Requires Mg(2+) as cofactor.

It is found in the cytoplasm. It carries out the reaction Endonucleolytic cleavage to 5'-phosphomonoester.. Digests double-stranded RNA. Involved in the processing of primary rRNA transcript to yield the immediate precursors to the large and small rRNAs (23S and 16S). Processes some mRNAs, and tRNAs when they are encoded in the rRNA operon. Processes pre-crRNA and tracrRNA of type II CRISPR loci if present in the organism. The chain is Ribonuclease 3 from Blochmanniella floridana.